Reading from the N-terminus, the 566-residue chain is Oxygen-dependent choline dehydrogenase (566 aa).

Residue 7-36 coordinates FAD; the sequence is DYIICGAGSAGNVLATRLTEDPNVTVLLLE. Positions 185–204 are disordered; the sequence is EGFGPMDRTVTPKGRRASTA. The Proton acceptor role is filled by histidine 474.

The protein belongs to the GMC oxidoreductase family. It depends on FAD as a cofactor.

It carries out the reaction choline + A = betaine aldehyde + AH2. The catalysed reaction is betaine aldehyde + NAD(+) + H2O = glycine betaine + NADH + 2 H(+). The protein operates within amine and polyamine biosynthesis; betaine biosynthesis via choline pathway; betaine aldehyde from choline (cytochrome c reductase route): step 1/1. Involved in the biosynthesis of the osmoprotectant glycine betaine. Catalyzes the oxidation of choline to betaine aldehyde and betaine aldehyde to glycine betaine at the same rate. The polypeptide is Oxygen-dependent choline dehydrogenase (Burkholderia vietnamiensis (strain G4 / LMG 22486) (Burkholderia cepacia (strain R1808))).